The primary structure comprises 130 residues: Small ribosomal subunit protein uS11 (130 aa).

This sequence belongs to the universal ribosomal protein uS11 family. As to quaternary structure, part of the 30S ribosomal subunit. Interacts with proteins S7 and S18. Binds to IF-3.

Its function is as follows. Located on the platform of the 30S subunit, it bridges several disparate RNA helices of the 16S rRNA. Forms part of the Shine-Dalgarno cleft in the 70S ribosome. This Prochlorococcus marinus (strain AS9601) protein is Small ribosomal subunit protein uS11.